Reading from the N-terminus, the 352-residue chain is UDP-N-acetylglucosamine--N-acetylmuramyl-(pentapeptide) pyrophosphoryl-undecaprenol N-acetylglucosamine transferase 2 (352 aa).

UDP-N-acetyl-alpha-D-glucosamine contacts are provided by residues 11-13, Arg-164, Ser-194, and Gln-289; that span reads SAG.

The protein belongs to the glycosyltransferase 28 family. MurG subfamily.

It localises to the cell membrane. It catalyses the reaction di-trans,octa-cis-undecaprenyl diphospho-N-acetyl-alpha-D-muramoyl-L-alanyl-D-glutamyl-meso-2,6-diaminopimeloyl-D-alanyl-D-alanine + UDP-N-acetyl-alpha-D-glucosamine = di-trans,octa-cis-undecaprenyl diphospho-[N-acetyl-alpha-D-glucosaminyl-(1-&gt;4)]-N-acetyl-alpha-D-muramoyl-L-alanyl-D-glutamyl-meso-2,6-diaminopimeloyl-D-alanyl-D-alanine + UDP + H(+). It participates in cell wall biogenesis; peptidoglycan biosynthesis. Cell wall formation. Catalyzes the transfer of a GlcNAc subunit on undecaprenyl-pyrophosphoryl-MurNAc-pentapeptide (lipid intermediate I) to form undecaprenyl-pyrophosphoryl-MurNAc-(pentapeptide)GlcNAc (lipid intermediate II). This is UDP-N-acetylglucosamine--N-acetylmuramyl-(pentapeptide) pyrophosphoryl-undecaprenol N-acetylglucosamine transferase 2 from Bacillus cereus (strain ATCC 10987 / NRS 248).